Reading from the N-terminus, the 201-residue chain is Natural cytotoxicity triggering receptor 3 (201 aa).

The signal sequence occupies residues 1 to 18 (MAWMLLLILIMVHPGSCA). Residues 19–126 (LWVSQPPEIR…VGTGNGTRLV (108 aa)) enclose the Ig-like domain. Residues 19-135 (LWVSQPPEIR…VVEKEHPQLG (117 aa)) are Extracellular-facing. Cysteines 39 and 108 form a disulfide. N-linked (GlcNAc...) asparagine glycosylation is found at asparagine 42 and asparagine 121. Residues 136–156 (AGTVLLLRAGFYAVSFLSVAV) traverse the membrane as a helical segment. The Cytoplasmic segment spans residues 157–201 (GSTVYYQGKCLTWKGPRRQLPAVVPAPLPPPCGSSAQLLPPVPGG).

It belongs to the natural cytotoxicity receptor (NCR) family. Homodimer in the unliganted form. Interacts with CD3Z. Interacts with and is activated by binding to NCR3LG1. Interacts with and is activated by binding to BAG6. Interacts with and is inhibited by binding to LGALS3.

Its subcellular location is the cell membrane. Its function is as follows. Cell membrane receptor of natural killer/NK cells that is activated by binding of extracellular ligands including BAG6 and NCR3LG1. Stimulates NK cells cytotoxicity toward neighboring cells producing these ligands. It controls, for instance, NK cells cytotoxicity against tumor cells. Engagement of NCR3 by BAG6 also promotes myeloid dendritic cells (DC) maturation, both through killing DCs that did not acquire a mature phenotype, and inducing the release by NK cells of TNFA and IFNG that promote DC maturation. The chain is Natural cytotoxicity triggering receptor 3 (NCR3) from Pan troglodytes (Chimpanzee).